The sequence spans 206 residues: Phosphoheptose isomerase (206 aa).

The 159-residue stretch at 37-195 (LVDAFKAGKK…IEQKMDINNE (159 aa)) folds into the SIS domain. Residue 52–54 (NGG) participates in substrate binding. Zn(2+) is bound by residues H61 and E65. Substrate-binding positions include E65, 93 to 94 (ND), 119 to 121 (STS), S124, and Q172. Zn(2+)-binding residues include Q172 and H180.

This sequence belongs to the SIS family. GmhA subfamily. In terms of assembly, homotetramer. Zn(2+) is required as a cofactor.

It is found in the cytoplasm. It catalyses the reaction 2 D-sedoheptulose 7-phosphate = D-glycero-alpha-D-manno-heptose 7-phosphate + D-glycero-beta-D-manno-heptose 7-phosphate. It functions in the pathway carbohydrate biosynthesis; D-glycero-D-manno-heptose 7-phosphate biosynthesis; D-glycero-alpha-D-manno-heptose 7-phosphate and D-glycero-beta-D-manno-heptose 7-phosphate from sedoheptulose 7-phosphate: step 1/1. Functionally, catalyzes the isomerization of sedoheptulose 7-phosphate in D-glycero-D-manno-heptose 7-phosphate. The sequence is that of Phosphoheptose isomerase from Hamiltonella defensa subsp. Acyrthosiphon pisum (strain 5AT).